We begin with the raw amino-acid sequence, 41 residues long: Minor histocompatibility protein HB-1 (41 aa).

The interval 9 to 17 is loss of recognition by cytotoxic T lymphocyte (CTL); sequence EEKRGSLHV.

As to quaternary structure, HB-1 forms a complex with MHC class I HLA-B44. In terms of tissue distribution, expressed in acute lymphoblastic leukemia B-cells and Epstein-Barr virus-transformed B-cells.

Functionally, precursor of the histocomplatibility antigen HB-1. More generally, minor histocomplatibility antigens (mHags) refer to immunogenic peptide which, when complexed with MHC, can generate an immune response after recognition by specific T-cells. The peptides are derived from polymorphic intracellular proteins, which are cleaved by normal pathways of antigen processing. The binding of these peptides to MHC class I or class II molecules and its expression on the cell surface can stimulate T-cell responses and thereby trigger graft rejection or graft-versus-host disease (GVHD) after hematopoietic stem cell transplantation from HLA-identical sibling donor. GVHD is a frequent complication after bone marrow transplantation (BMT), due to mismatch of minor histocomplatibility antigen in HLA-matched sibling marrow transplants. HB-1 is presented on the cell surface by MHC class I HLA-B44. This complex specifically elicits donor-cytotoxic T lymphocyte (CTL) reactivity in B-cell acute lymphoblastic leukemia (B-ALL) after treatment by HLA-identical allogenic bone marrow transplantation (BMT). It induces cell recognition and lysis by CTL. However, HB-1 restricted expression in B-ALL cells and not in normal tissues may allow a specific CTL reactivity against B-ALL without the risk of evoking graft-versus-host disease. In Homo sapiens (Human), this protein is Minor histocompatibility protein HB-1 (HMHB1).